We begin with the raw amino-acid sequence, 520 residues long: Laccase-4 (520 aa).

Positions 1–18 (MGRFSSLCALTAVIHSFG) are cleaved as a signal peptide. 3 consecutive Plastocyanin-like domains span residues 24–149 (IGPV…MVVY), 161–303 (VDDE…ILRY), and 370–491 (TVPV…FSED). Residues Asn-73 and Asn-76 are each glycosylated (N-linked (GlcNAc...) asparagine). Positions 86, 88, 131, and 133 each coordinate Cu cation. 2 disulfides stabilise this stretch: Cys-107-Cys-509 and Cys-139-Cys-227. Residues Asn-239 and Asn-399 are each glycosylated (N-linked (GlcNAc...) asparagine). His-418, His-421, His-423, His-473, Cys-474, His-475, and His-479 together coordinate Cu cation. Residue Asn-497 is glycosylated (N-linked (GlcNAc...) asparagine).

The protein belongs to the multicopper oxidase family. As to quaternary structure, homodimer. Cu cation is required as a cofactor.

The protein resides in the secreted. It carries out the reaction 4 hydroquinone + O2 = 4 benzosemiquinone + 2 H2O. Functionally, lignin degradation and detoxification of lignin-derived products. The protein is Laccase-4 (LCC4) of Trametes villosa (White-rot fungus).